The following is a 56-amino-acid chain: MAKKNKNILVRLVSTAGTGFFLVKKRNPKTQTEKLSFRKYDPKVRKHVLFKEEKIK.

Belongs to the bacterial ribosomal protein bL33 family.

In Rickettsia bellii (strain OSU 85-389), this protein is Large ribosomal subunit protein bL33.